The following is a 331-amino-acid chain: 4-hydroxythreonine-4-phosphate dehydrogenase (331 aa).

Substrate is bound by residues His-137 and Thr-138. Residues His-167, His-212, and His-267 each contribute to the a divalent metal cation site. The substrate site is built by Lys-275, Asn-284, and Arg-293.

Belongs to the PdxA family. As to quaternary structure, homodimer. The cofactor is Zn(2+). Mg(2+) serves as cofactor. It depends on Co(2+) as a cofactor.

The protein resides in the cytoplasm. It catalyses the reaction 4-(phosphooxy)-L-threonine + NAD(+) = 3-amino-2-oxopropyl phosphate + CO2 + NADH. It participates in cofactor biosynthesis; pyridoxine 5'-phosphate biosynthesis; pyridoxine 5'-phosphate from D-erythrose 4-phosphate: step 4/5. Catalyzes the NAD(P)-dependent oxidation of 4-(phosphooxy)-L-threonine (HTP) into 2-amino-3-oxo-4-(phosphooxy)butyric acid which spontaneously decarboxylates to form 3-amino-2-oxopropyl phosphate (AHAP). The sequence is that of 4-hydroxythreonine-4-phosphate dehydrogenase from Yersinia pseudotuberculosis serotype I (strain IP32953).